We begin with the raw amino-acid sequence, 495 residues long: Putative lon protease homolog (495 aa).

Gly-52 to Ser-59 contributes to the ATP binding site. Residues Tyr-471 to Glu-495 form a disordered region. Residues Ser-472–Tyr-486 show a composition bias toward polar residues.

It belongs to the peptidase S16 family.

The chain is Putative lon protease homolog from Thermoplasma volcanium (strain ATCC 51530 / DSM 4299 / JCM 9571 / NBRC 15438 / GSS1).